A 97-amino-acid polypeptide reads, in one-letter code: UPF0235 protein APP7_1431 (97 aa).

It belongs to the UPF0235 family.

The polypeptide is UPF0235 protein APP7_1431 (Actinobacillus pleuropneumoniae serotype 7 (strain AP76)).